Reading from the N-terminus, the 50-residue chain is Large ribosomal subunit protein bL36B (50 aa).

The protein belongs to the bacterial ribosomal protein bL36 family.

This is Large ribosomal subunit protein bL36B from Pseudomonas aeruginosa (strain UCBPP-PA14).